The primary structure comprises 174 residues: Thiol-disulfide oxidoreductase ResA (174 aa).

Residues 11–30 (TVILLLLLAALGYTIYANFF) traverse the membrane as a helical; Signal-anchor for type II membrane protein segment. Residues 36-174 (VAVGSTAPDF…IKQHLESIKP (139 aa)) enclose the Thioredoxin domain. A disulfide bond links Cys74 and Cys77.

Belongs to the thioredoxin family. ResA subfamily.

Its subcellular location is the cell membrane. It participates in protein modification; cytochrome c assembly. Its function is as follows. Thiol-disulfide oxidoreductase which is required in disulfide reduction during c-type cytochrome synthesis. May accept reducing equivalents from CcdA, leading to breakage of disulfide bonds in apocytochrome c; following this reduction heme can be covalently attached. The protein is Thiol-disulfide oxidoreductase ResA of Geobacillus thermodenitrificans (strain NG80-2).